We begin with the raw amino-acid sequence, 372 residues long: DNA replication and repair protein RecF (372 aa).

ATP is bound at residue 30-37 (GENAQGKT).

The protein belongs to the RecF family.

Its subcellular location is the cytoplasm. Its function is as follows. The RecF protein is involved in DNA metabolism; it is required for DNA replication and normal SOS inducibility. RecF binds preferentially to single-stranded, linear DNA. It also seems to bind ATP. This chain is DNA replication and repair protein RecF, found in Geobacillus thermodenitrificans (strain NG80-2).